The primary structure comprises 197 residues: Cell division protein SepF (197 aa).

Disordered regions lie at residues 38–72 (MPTP…TTPT) and 164–197 (LSRE…AQAQ). Residues 58–72 (TVASNFAMNSNTTPT) show a composition bias toward polar residues. Low complexity predominate over residues 170 to 185 (PATPAAPARPAAPAPA).

It belongs to the SepF family. As to quaternary structure, homodimer. Interacts with FtsZ.

The protein resides in the cytoplasm. In terms of biological role, cell division protein that is part of the divisome complex and is recruited early to the Z-ring. Probably stimulates Z-ring formation, perhaps through the cross-linking of FtsZ protofilaments. Its function overlaps with FtsA. This chain is Cell division protein SepF, found in Picosynechococcus sp. (strain ATCC 27264 / PCC 7002 / PR-6) (Agmenellum quadruplicatum).